Here is a 161-residue protein sequence, read N- to C-terminus: Large ribosomal subunit protein eL21 (161 aa).

This sequence belongs to the eukaryotic ribosomal protein eL21 family.

The polypeptide is Large ribosomal subunit protein eL21 (RPL21) (Cyanophora paradoxa).